A 259-amino-acid polypeptide reads, in one-letter code: ATP synthase subunit a (259 aa).

Residues 1–7 (MTNNYIN) constitute a propeptide, removed in mature form. A run of 5 helical transmembrane segments spans residues 36–56 (FSLY…LSIG), 95–115 (YVPL…IGMV), 125–145 (LIYI…LGLF), 164–206 (LVPV…NLVK), and 211–253 (INYF…SYLK).

In terms of assembly, F-type ATP synthases have 2 components, the catalytic core F(1) and the membrane-embedded component F(0), linked together by a central stalk and a peripheral stalk. The central stalk, also called rotor shaft, is often seen as part of F(1). The peripheral stalk is seen as part of F(0). F(0) contains the membrane channel next to the rotor. F-type ATP synthases form dimers but each monomer functions independently in ATP generation. The dimer consists of 18 different polypeptides: ATP1 (subunit alpha, part of F(1), 3 molecules per monomer), ATP2 (subunit beta, part of F(1), 3 molecules per monomer), ATP3 (subunit gamma, part of the central stalk), ATP4 (subunit b, part of the peripheral stalk), ATP5/OSCP (subunit 5/OSCP, part of the peripheral stalk), ATP6 (subunit a, part of the peripheral stalk), ATP7 (subunit d, part of the peripheral stalk), ATP8 (subunit 8, part of the peripheral stalk), OLI1 (subunit c, part of the rotor, 10 molecules per monomer), ATP14 (subunit h, part of the peripheral stalk), ATP15 (subunit epsilon, part of the central stalk), ATP16 (subunit delta, part of the central stalk), ATP17 (subunit f, part of the peripheral stalk), ATP18 (subunit i/j, part of the peripheral stalk). Dimer-specific subunits are ATP19 (subunit k, at interface between monomers), ATP20 (subunit g, at interface between monomers), TIM11 (subunit e, at interface between monomers). Also contains subunit L.

It is found in the mitochondrion inner membrane. Its function is as follows. Mitochondrial membrane ATP synthase (F(1)F(0) ATP synthase or Complex V) produces ATP from ADP in the presence of a proton gradient across the membrane which is generated by electron transport complexes of the respiratory chain. F-type ATP synthases consist of two structural domains, F(1) - containing the extramembraneous catalytic core, and F(0) - containing the membrane proton channel, linked together by a central stalk and a peripheral stalk. During catalysis, ATP synthesis in the catalytic domain of F(1) is coupled via a rotary mechanism of the central stalk subunits to proton translocation. Key component of the proton channel; it may play a direct role in the translocation of protons across the membrane. The polypeptide is ATP synthase subunit a (Pichia angusta (Yeast)).